Consider the following 376-residue polypeptide: MVGSRTSPIFNALRVELNAREAELVEIPLIQPADPFLDMAGEDLRRRIFLTENENGDSLCLRPEFTIPVCRNHIALNAATPKRYAYLGEVFRQRRDGAAEFLQAGIEDLGAADEAASDARSLADALSCVKAIAPDAPLEIVLGDQSVFAGMLKALGLPQGWRKKLLRSFGDAHSMDLALAELTGTQRRDPLPESLAVLVAEGDEIGLARMLEAEMLEAGISPGAGRTPVEIARRLIEKEDLAATHFPAAALDLLRQFLAIRVSLDTAAVTLRAFAADNALDLGAVLQKFEARADAIAQAGIEMKDIIYDASFGRPLDYYTGLVYEIRDASNRQDGVLAGGGRYDRLLTMLGACEAIPGVGFSIWLDRLQALAGEKQ.

The protein belongs to the class-II aminoacyl-tRNA synthetase family. HisZ subfamily. As to quaternary structure, heteromultimer composed of HisG and HisZ subunits.

Its subcellular location is the cytoplasm. The protein operates within amino-acid biosynthesis; L-histidine biosynthesis; L-histidine from 5-phospho-alpha-D-ribose 1-diphosphate: step 1/9. Its function is as follows. Required for the first step of histidine biosynthesis. May allow the feedback regulation of ATP phosphoribosyltransferase activity by histidine. The chain is ATP phosphoribosyltransferase regulatory subunit from Brucella canis (strain ATCC 23365 / NCTC 10854 / RM-666).